Reading from the N-terminus, the 569-residue chain is Acyl-CoA-binding domain-containing protein 5 (569 aa).

A signal peptide spans 1–31 (MELFYELLLTAAASLLVAFLLARLLASAATA). The ACB domain maps to 415–506 (IEKRFGVAAA…LSEAIPGWMG (92 aa)). The an acyl-CoA site is built by Lys-474 and Tyr-493. The N-linked (GlcNAc...) asparagine glycan is linked to Asn-508. Polar residues-rich tracts occupy residues 533–544 (INQHDSQGNEDN) and 552–569 (LTSSPNPEKGQSSDIPAE). The tract at residues 533–569 (INQHDSQGNEDNTGMYEGHLTSSPNPEKGQSSDIPAE) is disordered.

Belongs to the ACBP family. Highly expressed in seeds and leaves. Expressed at low levels in roots.

Its subcellular location is the endoplasmic reticulum. Binds medium- and long-chain acyl-CoA esters with high affinity. Can interact in vitro with palmitoyl-CoA and linolenoyl-CoA. Binds phosphatidic acid (PA) and phosphatidylcholine (PC) in vitro. May play a role in the biosynthesis of phospholipids. This is Acyl-CoA-binding domain-containing protein 5 from Oryza sativa subsp. japonica (Rice).